Here is a 243-residue protein sequence, read N- to C-terminus: Ribonuclease 3 (243 aa).

The 126-residue stretch at 19–144 (FNTLHKLLGF…LVGAIYLDRG (126 aa)) folds into the RNase III domain. Residue glutamate 61 participates in Mg(2+) binding. Aspartate 65 is a catalytic residue. 2 residues coordinate Mg(2+): asparagine 130 and glutamate 133. Glutamate 133 is a catalytic residue. Residues 172 to 240 (SYKSLLIEWC…SKRAYYALQN (69 aa)) enclose the DRBM domain.

Belongs to the ribonuclease III family. In terms of assembly, homodimer. It depends on Mg(2+) as a cofactor.

The protein resides in the cytoplasm. The enzyme catalyses Endonucleolytic cleavage to 5'-phosphomonoester.. Functionally, digests double-stranded RNA. Involved in the processing of primary rRNA transcript to yield the immediate precursors to the large and small rRNAs (23S and 16S). Processes some mRNAs, and tRNAs when they are encoded in the rRNA operon. Processes pre-crRNA and tracrRNA of type II CRISPR loci if present in the organism. The polypeptide is Ribonuclease 3 (rnc) (Zunongwangia profunda (strain DSM 18752 / CCTCC AB 206139 / SM-A87) (Wangia profunda)).